Here is a 316-residue protein sequence, read N- to C-terminus: 4-diphosphocytidyl-2-C-methyl-D-erythritol kinase (316 aa).

The active site involves lysine 32. Position 126–136 (126–136 (PVGAGLGGGSA)) interacts with ATP. Aspartate 168 is a catalytic residue.

The protein belongs to the GHMP kinase family. IspE subfamily.

It carries out the reaction 4-CDP-2-C-methyl-D-erythritol + ATP = 4-CDP-2-C-methyl-D-erythritol 2-phosphate + ADP + H(+). Its pathway is isoprenoid biosynthesis; isopentenyl diphosphate biosynthesis via DXP pathway; isopentenyl diphosphate from 1-deoxy-D-xylulose 5-phosphate: step 3/6. In terms of biological role, catalyzes the phosphorylation of the position 2 hydroxy group of 4-diphosphocytidyl-2C-methyl-D-erythritol. The sequence is that of 4-diphosphocytidyl-2-C-methyl-D-erythritol kinase from Bifidobacterium longum (strain NCC 2705).